The primary structure comprises 207 residues: Ribosomal RNA large subunit methyltransferase E (207 aa).

Gly-61, Trp-63, Asp-81, Asp-97, and Asp-122 together coordinate S-adenosyl-L-methionine. The active-site Proton acceptor is the Lys-162.

Belongs to the class I-like SAM-binding methyltransferase superfamily. RNA methyltransferase RlmE family.

The protein resides in the cytoplasm. The enzyme catalyses uridine(2552) in 23S rRNA + S-adenosyl-L-methionine = 2'-O-methyluridine(2552) in 23S rRNA + S-adenosyl-L-homocysteine + H(+). Functionally, specifically methylates the uridine in position 2552 of 23S rRNA at the 2'-O position of the ribose in the fully assembled 50S ribosomal subunit. This Pseudomonas putida (strain ATCC 700007 / DSM 6899 / JCM 31910 / BCRC 17059 / LMG 24140 / F1) protein is Ribosomal RNA large subunit methyltransferase E.